The sequence spans 142 residues: Large ribosomal subunit protein uL11 (142 aa).

This sequence belongs to the universal ribosomal protein uL11 family. As to quaternary structure, part of the ribosomal stalk of the 50S ribosomal subunit. Interacts with L10 and the large rRNA to form the base of the stalk. L10 forms an elongated spine to which L12 dimers bind in a sequential fashion forming a multimeric L10(L12)X complex. One or more lysine residues are methylated.

Its function is as follows. Forms part of the ribosomal stalk which helps the ribosome interact with GTP-bound translation factors. The protein is Large ribosomal subunit protein uL11 of Xanthomonas campestris pv. campestris (strain B100).